An 826-amino-acid chain; its full sequence is Leucine--tRNA ligase (826 aa).

The 'HIGH' region signature appears at 41–51; it reads PYPSGKLHMGH. Residues 586 to 590 carry the 'KMSKS' region motif; the sequence is KMSKS. Lys589 provides a ligand contact to ATP.

This sequence belongs to the class-I aminoacyl-tRNA synthetase family.

It is found in the cytoplasm. It catalyses the reaction tRNA(Leu) + L-leucine + ATP = L-leucyl-tRNA(Leu) + AMP + diphosphate. The polypeptide is Leucine--tRNA ligase (Natranaerobius thermophilus (strain ATCC BAA-1301 / DSM 18059 / JW/NM-WN-LF)).